We begin with the raw amino-acid sequence, 325 residues long: Helicase VP6-A (325 aa).

Disordered stretches follow at residues 1 to 127 and 174 to 230; these read MLLA…NGRR and EGVA…EPAR. 4 stretches are compositionally biased toward basic and acidic residues: residues 8 to 18, 32 to 54, 61 to 79, and 92 to 105; these read VIKRSSEELKQ, EGGK…KDGE, GQKE…DRRI, and PGER…RGDG. K106 lines the ATP pocket. The segment covering 106–122 has biased composition (gly residues); that stretch reads KVGGGGGDADAGVGATG. The segment covering 175–229 has biased composition (basic and acidic residues); the sequence is GVAEQTERSRDLRRKEKNGTHAKAVERGGRKQRKESHGDAQREGVEEEKTSEEPA.

Belongs to the orbivirus VP6 family. As to quaternary structure, homohexamer.

The protein localises to the virion. The catalysed reaction is ATP + H2O = ADP + phosphate + H(+). ATP dependent RNA helicase essential for RNA packaging and viral transcription. Possesses ss- and dsRNA-binding capacity. The polypeptide is Helicase VP6-A (Segment-9) (Bluetongue virus 13 (isolate USA) (BTV 13)).